Reading from the N-terminus, the 335-residue chain is Holliday junction branch migration complex subunit RuvB (335 aa).

The interval 1 to 181 (MTRILDNDLI…FGITGHMEYY (181 aa)) is large ATPase domain (RuvB-L). ATP contacts are provided by residues L20, R21, G62, K65, T66, T67, 128 to 130 (EDF), R171, Y181, and R218. Position 66 (T66) interacts with Mg(2+). Residues 182–252 (QTADLTEIVE…ITDKALTMLD (71 aa)) are small ATPAse domain (RuvB-S). The tract at residues 255 to 335 (QEGLDYVDQK…GYPYEKTIKT (81 aa)) is head domain (RuvB-H). 4 residues coordinate DNA: R291, R310, R312, and R315.

This sequence belongs to the RuvB family. Homohexamer. Forms an RuvA(8)-RuvB(12)-Holliday junction (HJ) complex. HJ DNA is sandwiched between 2 RuvA tetramers; dsDNA enters through RuvA and exits via RuvB. An RuvB hexamer assembles on each DNA strand where it exits the tetramer. Each RuvB hexamer is contacted by two RuvA subunits (via domain III) on 2 adjacent RuvB subunits; this complex drives branch migration. In the full resolvosome a probable DNA-RuvA(4)-RuvB(12)-RuvC(2) complex forms which resolves the HJ.

It localises to the cytoplasm. It carries out the reaction ATP + H2O = ADP + phosphate + H(+). Its function is as follows. The RuvA-RuvB-RuvC complex processes Holliday junction (HJ) DNA during genetic recombination and DNA repair, while the RuvA-RuvB complex plays an important role in the rescue of blocked DNA replication forks via replication fork reversal (RFR). RuvA specifically binds to HJ cruciform DNA, conferring on it an open structure. The RuvB hexamer acts as an ATP-dependent pump, pulling dsDNA into and through the RuvAB complex. RuvB forms 2 homohexamers on either side of HJ DNA bound by 1 or 2 RuvA tetramers; 4 subunits per hexamer contact DNA at a time. Coordinated motions by a converter formed by DNA-disengaged RuvB subunits stimulates ATP hydrolysis and nucleotide exchange. Immobilization of the converter enables RuvB to convert the ATP-contained energy into a lever motion, pulling 2 nucleotides of DNA out of the RuvA tetramer per ATP hydrolyzed, thus driving DNA branch migration. The RuvB motors rotate together with the DNA substrate, which together with the progressing nucleotide cycle form the mechanistic basis for DNA recombination by continuous HJ branch migration. Branch migration allows RuvC to scan DNA until it finds its consensus sequence, where it cleaves and resolves cruciform DNA. The protein is Holliday junction branch migration complex subunit RuvB of Streptococcus equi subsp. equi (strain 4047).